Consider the following 142-residue polypeptide: Hemoglobin subunit alpha-A (142 aa).

The region spanning 2–142 (VLSAADKGNV…VATVLTAKYR (141 aa)) is the Globin domain. O2 is bound at residue His-59. Position 88 (His-88) interacts with heme b.

This sequence belongs to the globin family. In terms of assembly, heterotetramer of two alpha chains and two beta chains. Red blood cells.

In terms of biological role, involved in oxygen transport from the lung to the various peripheral tissues. The chain is Hemoglobin subunit alpha-A (HBAA) from Anseranas semipalmata (Magpie goose).